Consider the following 347-residue polypeptide: MKPAGPRKRAVDPLAHLVLTRYMEAHFEALLVTGYSADTVRARRISIRRFIVWCEERGIAQPADVTRAVLERYQRHLFYYRKPNGAPLTLGSQHGALAPLKTWFKWLARENHILYNPASELDLPKLPKHLPRAILSVQEVEAILAEADPATPYGLRDRAMLELLYSTGIRRMEVAGLALYDVDATRRLAFVRDGKGAKDRVVPVGVRALAWLDRYLLEARPQLIVAEREALFVTDYGEPVSPEYVASRVKRYMEFAGIQKPGATHLLRHAMATHMLEAGADVRVLQALLGHAQLNTTEIYTHVSIEHLRAIHDATHPARLQREDVLAADATDAARQALADALDRDEG.

The Core-binding (CB) domain maps to 17–108 (LVLTRYMEAH…PLKTWFKWLA (92 aa)). The region spanning 125-313 (KLPKHLPRAI…SIEHLRAIHD (189 aa)) is the Tyr recombinase domain. Residues Arg170, Lys195, His265, Arg268, and His291 contribute to the active site. The O-(3'-phospho-DNA)-tyrosine intermediate role is filled by Tyr300.

This sequence belongs to the 'phage' integrase family.

It localises to the cytoplasm. Its function is as follows. Site-specific tyrosine recombinase, which acts by catalyzing the cutting and rejoining of the recombining DNA molecules. This is Tyrosine recombinase XerC 2 from Ralstonia nicotianae (strain ATCC BAA-1114 / GMI1000) (Ralstonia solanacearum).